A 145-amino-acid polypeptide reads, in one-letter code: Cystin-1 (145 aa).

A disordered region spans residues Met-1–Asp-129. Gly-2 carries N-myristoyl glycine lipidation. The Ciliary targeting motif signature appears at Ala-29–Gly-33. Position 116 is a phosphoserine (Ser-116).

In terms of assembly, interacts (when myristoylated) with UNC119 and UNC119B; interaction is required for localization to cilium. As to expression, expressed primarily in the kidney and liver. Expressed at lower levels in the lung, brain and heart.

It localises to the cell projection. Its subcellular location is the cilium membrane. It is found in the cytoplasm. The protein localises to the cytoskeleton. The protein resides in the cilium axoneme. This is Cystin-1 (Cys1) from Mus musculus (Mouse).